A 569-amino-acid chain; its full sequence is WD repeat-containing protein 20 (569 aa).

Ala-2 is modified (N-acetylalanine). 7 WD repeats span residues 94 to 138 (RIYK…KETS), 139 to 210 (KLFN…KSTR), 211 to 252 (NPLL…FDSV), 253 to 331 (ELHG…SGSD), 332 to 426 (EDFQ…NSVP), 427 to 523 (PPLP…VPLL), and 524 to 559 (EPLI…CTWG). Phosphoserine occurs at positions 357 and 360. Polar residues-rich tracts occupy residues 405 to 423 (NATS…TPGN) and 431 to 445 (RSNS…NAGS). Residues 405-445 (NATSPPAGSNGNSVTTPGNSVPPPLPRSNSLPHSAVSNAGS) are disordered. Ser-432, Ser-434, and Ser-465 each carry phosphoserine. Residues 450–468 (MDGAIASGVSKFATLSLHD) are mediates XPO1-dependent nuclear export of WDR20-USP12 complexes.

In terms of assembly, interacts with USP12; promotes translocation of USP12/WDR20 to the plasma membrane. Component of the USP12/WDR20/WDR48 deubiquitinating complex. Interacts with USP46; contributes to the cytoplasmic localization of the USP46/WDR20 complex. Component of the USP12/DMWD/WDR48 deubiquitinating complex.

It is found in the cytoplasm. Its subcellular location is the nucleus. In terms of biological role, regulator of deubiquitinating complexes. Activates deubiquitinating activity of complexes containing USP12. Anchors at the base of the ubiquitin-contacting loop of USP12 and remotely modulates the catalytic center of the enzyme. Regulates shuttling of the USP12 deubiquitinase complex between the plasma membrane, cytoplasm and nucleus. This Homo sapiens (Human) protein is WD repeat-containing protein 20 (WDR20).